Reading from the N-terminus, the 181-residue chain is Heavy metal-associated isoprenylated plant protein 46 (181 aa).

One can recognise an HMA domain in the interval 2-71; sequence KQKILIRVTM…KVAFAELVSV (70 aa). The interval 74-121 is disordered; the sequence is VEPPKKEDEKKGGDGKGAEGKGGDQKGGDKKGPDDKEPPEPKPVPCYP. Residues 75–113 show a composition bias toward basic and acidic residues; the sequence is EPPKKEDEKKGGDGKGAEGKGGDQKGGDKKGPDDKEPPE. Cys178 carries the cysteine methyl ester modification. The S-farnesyl cysteine moiety is linked to residue Cys178. The propeptide at 179–181 is removed in mature form; that stretch reads KIM.

It belongs to the HIPP family.

In terms of biological role, probable heavy-metal-binding protein. The polypeptide is Heavy metal-associated isoprenylated plant protein 46 (Arabidopsis thaliana (Mouse-ear cress)).